We begin with the raw amino-acid sequence, 555 residues long: Ribonuclease J2 (555 aa).

Positions 74, 76, 142, and 164 each coordinate Zn(2+). 364–368 (HVSGH) is a binding site for substrate.

The protein belongs to the metallo-beta-lactamase superfamily. RNA-metabolizing metallo-beta-lactamase-like family. Bacterial RNase J subfamily. Unclear whether it forms homodimers or belongs to a larger complex. According to probably does not form homodimers, while shows homodimer formation. Both reports show RNase J1 and J2 interaction, probably as a heterotetramer shows it is a component of a possible RNA degradosome complex composed of rny, rnjA, rnjB, pnp, pfkA and eno, while finds no evidence of an RNA degradosome complex. Zn(2+) is required as a cofactor.

The protein localises to the cytoplasm. Endonucleolytically cleaves the 5'-leader sequence of certain mRNAs. Endonuclease digestion by the RNase J1/J2 complex occurs at a different site and in some cases more efficiently than J1 or J2 alone. The exonuclease activity of the J1/J2 complex is highly processive on substrates longer than 5 nucleotides, on shorter substrates is distributive. Plays a role in mRNA maturation and stability. Appears to have a limited effect on 16S rRNA maturation, despite its similarity to RNase J1. This subunit alone has very poor 5'-3' exonuclease activity. This is Ribonuclease J2 from Bacillus subtilis (strain 168).